A 556-amino-acid polypeptide reads, in one-letter code: Cytochrome P450 4g1 (556 aa).

Residues Glu356 and Cys497 each contribute to the heme site.

The protein belongs to the cytochrome P450 family. The cofactor is heme.

It is found in the endoplasmic reticulum membrane. The protein resides in the microsome membrane. Its function is as follows. May be involved in the metabolism of insect hormones and in the breakdown of synthetic insecticides. This chain is Cytochrome P450 4g1 (Cyp4g1), found in Drosophila melanogaster (Fruit fly).